The following is a 205-amino-acid chain: dITP/XTP pyrophosphatase (205 aa).

Position 8–13 (8–13) interacts with substrate; sequence SGNKGK. Asp-69 functions as the Proton acceptor in the catalytic mechanism. Asp-69 contacts Mg(2+). Residues Ser-70, 153 to 156, Lys-176, and 181 to 182 each bind substrate; these read HGYD and HR.

It belongs to the HAM1 NTPase family. In terms of assembly, homodimer. It depends on Mg(2+) as a cofactor.

It catalyses the reaction XTP + H2O = XMP + diphosphate + H(+). The catalysed reaction is dITP + H2O = dIMP + diphosphate + H(+). The enzyme catalyses ITP + H2O = IMP + diphosphate + H(+). In terms of biological role, pyrophosphatase that catalyzes the hydrolysis of nucleoside triphosphates to their monophosphate derivatives, with a high preference for the non-canonical purine nucleotides XTP (xanthosine triphosphate), dITP (deoxyinosine triphosphate) and ITP. Seems to function as a house-cleaning enzyme that removes non-canonical purine nucleotides from the nucleotide pool, thus preventing their incorporation into DNA/RNA and avoiding chromosomal lesions. In Shewanella oneidensis (strain ATCC 700550 / JCM 31522 / CIP 106686 / LMG 19005 / NCIMB 14063 / MR-1), this protein is dITP/XTP pyrophosphatase.